The sequence spans 1187 residues: Serine/threonine-protein kinase SIK3 homolog (1187 aa).

Over residues Met-1 to Pro-15 the composition is skewed to low complexity. The disordered stretch occupies residues Met-1–Ala-41. Residues Tyr-59–Met-310 form the Protein kinase domain. ATP is bound by residues Ile-65–Val-73 and Lys-88. Asp-181 (proton acceptor) is an active-site residue. Thr-214 is subject to Phosphothreonine. Ser-218 carries the post-translational modification Phosphoserine. Residues Leu-337–Asp-377 enclose the UBA domain. Disordered regions lie at residues Leu-548 to Ser-587, Ile-697 to Ser-776, and Cys-1060 to Gln-1092. Over residues Val-570–Pro-581 the composition is skewed to acidic residues. Residues Val-739–Gln-749 show a composition bias toward polar residues.

Belongs to the protein kinase superfamily. CAMK Ser/Thr protein kinase family. SNF1 subfamily. Mg(2+) is required as a cofactor.

The enzyme catalyses L-seryl-[protein] + ATP = O-phospho-L-seryl-[protein] + ADP + H(+). It carries out the reaction L-threonyl-[protein] + ATP = O-phospho-L-threonyl-[protein] + ADP + H(+). In Danio rerio (Zebrafish), this protein is Serine/threonine-protein kinase SIK3 homolog.